The following is a 628-amino-acid chain: Chaperone protein HtpG (628 aa).

Positions 1 to 339 (MSNNQQTLGF…SNDLPLNVSR (339 aa)) are a; substrate-binding. A b region spans residues 340 to 556 (EILQDNKTTA…NDQMTTQMAK (217 aa)). Positions 557–628 (LFAMSGQPVP…IKRVNTLLAG (72 aa)) are c.

It belongs to the heat shock protein 90 family. Homodimer.

It localises to the cytoplasm. Its function is as follows. Molecular chaperone. Has ATPase activity. The chain is Chaperone protein HtpG from Actinobacillus succinogenes (strain ATCC 55618 / DSM 22257 / CCUG 43843 / 130Z).